A 223-amino-acid polypeptide reads, in one-letter code: Sigma non-opioid intracellular receptor 1 (223 aa).

At 1 to 9 the chain is on the lumenal side; that stretch reads MCWAVGRRW. The interval 2-8 is targeting to endoplasmic reticulum-associated lipid droplets; the sequence is CWAVGRR. Residues 10–30 traverse the membrane as a helical segment; that stretch reads AWAALLLAVAAVLAQVVWLWL. Over 31–223 the chain is Cytoplasmic; sequence GTQSFVFQHE…LTTYLFGQDA (193 aa). Positions 99–106 are important for ligand-binding; that stretch reads SLSEYVLL. The segment at 177–223 is C-terminal hydrophobic region; that stretch reads VIPSTLGFALADTVFSTQDFLTLFYTLRAYARGLRLELTTYLFGQDA.

It belongs to the ERG2 family. Homotrimer. Forms a ternary complex with ANK2 and ITPR3. The complex is disrupted by agonists. Interacts with KCNA4. Interacts with KCNA2; cocaine consumption leads to increased interaction. Interacts with RNF112 in an oxidative stress-regulated manner.

It is found in the nucleus inner membrane. It localises to the nucleus outer membrane. Its subcellular location is the nucleus envelope. The protein localises to the cytoplasmic vesicle. The protein resides in the endoplasmic reticulum membrane. It is found in the membrane. It localises to the lipid droplet. Its subcellular location is the cell junction. The protein localises to the cell membrane. The protein resides in the cell projection. It is found in the growth cone. It localises to the postsynaptic density membrane. In terms of biological role, functions in lipid transport from the endoplasmic reticulum and is involved in a wide array of cellular functions probably through regulation of the biogenesis of lipid microdomains at the plasma membrane. Involved in the regulation of different receptors it plays a role in BDNF signaling and EGF signaling. Also regulates ion channels like the potassium channel and could modulate neurotransmitter release. Plays a role in calcium signaling through modulation together with ANK2 of the ITP3R-dependent calcium efflux at the endoplasmic reticulum. Plays a role in several other cell functions including proliferation, survival and death. Originally identified for its ability to bind various psychoactive drugs it is involved in learning processes, memory and mood alteration. Necessary for proper mitochondrial axonal transport in motor neurons, in particular the retrograde movement of mitochondria. Plays a role in protecting cells against oxidative stress-induced cell death via its interaction with RNF112. This Bos taurus (Bovine) protein is Sigma non-opioid intracellular receptor 1 (SIGMAR1).